We begin with the raw amino-acid sequence, 652 residues long: DNA ligase (652 aa).

NAD(+) contacts are provided by residues 29 to 33, 78 to 79, and Glu107; these read DAEYD and SL. Catalysis depends on Lys109, which acts as the N6-AMP-lysine intermediate. The NAD(+) site is built by Arg130, Glu164, Lys278, and Lys302. Zn(2+) contacts are provided by Cys395, Cys398, Cys413, and Cys418. A BRCT domain is found at 577 to 652; sequence ASDAALTGMT…IKDEAWLESL (76 aa).

Belongs to the NAD-dependent DNA ligase family. LigA subfamily. Mg(2+) serves as cofactor. The cofactor is Mn(2+).

The catalysed reaction is NAD(+) + (deoxyribonucleotide)n-3'-hydroxyl + 5'-phospho-(deoxyribonucleotide)m = (deoxyribonucleotide)n+m + AMP + beta-nicotinamide D-nucleotide.. In terms of biological role, DNA ligase that catalyzes the formation of phosphodiester linkages between 5'-phosphoryl and 3'-hydroxyl groups in double-stranded DNA using NAD as a coenzyme and as the energy source for the reaction. It is essential for DNA replication and repair of damaged DNA. This chain is DNA ligase, found in Streptococcus mutans serotype c (strain ATCC 700610 / UA159).